The primary structure comprises 245 residues: Phosphoadenosine 5'-phosphosulfate reductase (245 aa).

Cys239 serves as the catalytic Nucleophile; cysteine thiosulfonate intermediate.

Belongs to the PAPS reductase family. CysH subfamily.

The protein localises to the cytoplasm. It carries out the reaction [thioredoxin]-disulfide + sulfite + adenosine 3',5'-bisphosphate + 2 H(+) = [thioredoxin]-dithiol + 3'-phosphoadenylyl sulfate. Its pathway is sulfur metabolism; hydrogen sulfide biosynthesis; sulfite from sulfate: step 3/3. Catalyzes the formation of sulfite from phosphoadenosine 5'-phosphosulfate (PAPS) using thioredoxin as an electron donor. This chain is Phosphoadenosine 5'-phosphosulfate reductase, found in Alkalilimnicola ehrlichii (strain ATCC BAA-1101 / DSM 17681 / MLHE-1).